Here is a 197-residue protein sequence, read N- to C-terminus: Sec-independent protein translocase protein TatB (197 aa).

Residues 1 to 21 (MFDIGFGELLLVMVLGLIVLG) form a helical membrane-spanning segment. The tract at residues 93-197 (KRGYTETPSP…ASARQPSDSR (105 aa)) is disordered. 2 stretches are compositionally biased toward basic and acidic residues: residues 104–113 (KSDDPKKSGD) and 160–169 (NHNDGRHATS). Residues 180–197 (PEQSQPSAASARQPSDSR) show a composition bias toward low complexity.

Belongs to the TatB family. In terms of assembly, the Tat system comprises two distinct complexes: a TatABC complex, containing multiple copies of TatA, TatB and TatC subunits, and a separate TatA complex, containing only TatA subunits. Substrates initially bind to the TatABC complex, which probably triggers association of the separate TatA complex to form the active translocon.

Its subcellular location is the cell inner membrane. In terms of biological role, part of the twin-arginine translocation (Tat) system that transports large folded proteins containing a characteristic twin-arginine motif in their signal peptide across membranes. Together with TatC, TatB is part of a receptor directly interacting with Tat signal peptides. TatB may form an oligomeric binding site that transiently accommodates folded Tat precursor proteins before their translocation. This Pectobacterium atrosepticum (strain SCRI 1043 / ATCC BAA-672) (Erwinia carotovora subsp. atroseptica) protein is Sec-independent protein translocase protein TatB.